Consider the following 902-residue polypeptide: Calcium-activated chloride channel regulator 3A-1 (902 aa).

Positions 1 to 21 are cleaved as a signal peptide; sequence MVPGLQVLLFLTLHLLQNTES. Positions 45–199 are metalloprotease domain; it reads DERLIPSIKE…RITGTNVVHN (155 aa). N-linked (GlcNAc...) asparagine glycosylation occurs at asparagine 75. Histidine 155 serves as a coordination point for Zn(2+). Glutamate 156 is a catalytic residue. 2 residues coordinate Zn(2+): histidine 159 and aspartate 166. One can recognise a VWFA domain in the interval 308 to 476; that stretch reads VVCLVLDKSG…NSLIDAFSRI (169 aa). Asparagine 504, asparagine 515, asparagine 630, asparagine 687, asparagine 697, asparagine 809, and asparagine 814 each carry an N-linked (GlcNAc...) asparagine glycan.

This sequence belongs to the CLCR family. In terms of assembly, part of a complex composed of complement component C3, CLCA1/CLCA3, A2ML1/OH and ALB/serum albumin. Glycosylated. In terms of processing, the 130-kDa product is autoproteolytically processed by the metalloprotease domain and yields two subunits, a 90-kDa protein and a group of 32- to 38-kDa proteins. The cleavage is necessary for calcium-activated chloride channel (CaCC) activation activity. Highly expressed in skin and spleen, and at lower levels in kidney and liver. Also detected in lung and brain. Not detected in lung or brain. In lung, localizes to respiratory epithelia of the bronchi and trachea and the submucosal glands.

Its subcellular location is the cell membrane. Functionally, plays a role in modulating chloride current across the plasma membrane in a calcium-dependent manner. In Mus musculus (Mouse), this protein is Calcium-activated chloride channel regulator 3A-1.